The sequence spans 771 residues: 5-methyltetrahydropteroyltriglutamate--homocysteine methyltransferase (771 aa).

Residues 16–19 (RELK) and lysine 117 contribute to the 5-methyltetrahydropteroyltri-L-glutamate site. Residues 443-445 (IGS) and glutamate 496 each bind L-homocysteine. Residues 443-445 (IGS) and glutamate 496 contribute to the L-methionine site. Residues 527-528 (RC) and tryptophan 573 contribute to the 5-methyltetrahydropteroyltri-L-glutamate site. Residue aspartate 611 participates in L-homocysteine binding. Residue aspartate 611 participates in L-methionine binding. Glutamate 617 lines the 5-methyltetrahydropteroyltri-L-glutamate pocket. The Zn(2+) site is built by histidine 653, cysteine 655, and glutamate 677. Catalysis depends on histidine 706, which acts as the Proton donor. Position 738 (cysteine 738) interacts with Zn(2+).

The protein belongs to the vitamin-B12 independent methionine synthase family. Zn(2+) serves as cofactor.

The enzyme catalyses 5-methyltetrahydropteroyltri-L-glutamate + L-homocysteine = tetrahydropteroyltri-L-glutamate + L-methionine. It functions in the pathway amino-acid biosynthesis; L-methionine biosynthesis via de novo pathway; L-methionine from L-homocysteine (MetE route): step 1/1. Functionally, catalyzes the transfer of a methyl group from 5-methyltetrahydrofolate to homocysteine resulting in methionine formation. The polypeptide is 5-methyltetrahydropteroyltriglutamate--homocysteine methyltransferase (Stutzerimonas stutzeri (strain A1501) (Pseudomonas stutzeri)).